Reading from the N-terminus, the 124-residue chain is uncharacterized protein (124 aa).

The N-terminal stretch at 1 to 21 is a signal peptide; that stretch reads MFLLSLLHFFHPSLIPSLSLS.

This is an uncharacterized protein from Schizosaccharomyces pombe (strain 972 / ATCC 24843) (Fission yeast).